The chain runs to 202 residues: UPF0126 membrane protein YvgT (202 aa).

6 helical membrane passes run 3 to 23, 26 to 46, 63 to 83, 90 to 110, 113 to 133, and 160 to 180; these read WELL…IVAM, EYDI…GGAI, AYFQ…KLLL, GNLS…LYAV, GHPL…GGII, and IVGL…FVLV.

The protein belongs to the UPF0126 family.

Its subcellular location is the cell membrane. In Bacillus subtilis (strain 168), this protein is UPF0126 membrane protein YvgT (yvgT).